Consider the following 492-residue polypeptide: Nitrogenase molybdenum-iron protein alpha chain (492 aa).

3 residues coordinate [8Fe-7S] cluster: cysteine 62, cysteine 88, and cysteine 154. [7Fe-Mo-9S-C-homocitryl] cluster is bound by residues cysteine 275 and histidine 442.

It belongs to the NifD/NifK/NifE/NifN family. As to quaternary structure, tetramer of two alpha and two beta chains. Forms complex with the iron protein (nitrogenase component 2). [8Fe-7S] cluster is required as a cofactor. It depends on [7Fe-Mo-9S-C-homocitryl] cluster as a cofactor.

It carries out the reaction N2 + 8 reduced [2Fe-2S]-[ferredoxin] + 16 ATP + 16 H2O = H2 + 8 oxidized [2Fe-2S]-[ferredoxin] + 2 NH4(+) + 16 ADP + 16 phosphate + 6 H(+). Its activity is regulated as follows. Nitrogenase holoenzyme is subject to 'conformational protection' by FeSII; under oxidizing conditions FeSII binds to the holoenzyme and reversibly protects it from oxidation. Its function is as follows. This molybdenum-iron protein is part of the nitrogenase complex that catalyzes the key enzymatic reactions in nitrogen fixation. The sequence is that of Nitrogenase molybdenum-iron protein alpha chain (nifD) from Azotobacter vinelandii.